Consider the following 420-residue polypeptide: POU domain, class 4, transcription factor 1 (420 aa).

Residues 57–66 carry the POU-IV box motif; sequence RAEALAAVDI. 2 disordered regions span residues 94 to 117 and 132 to 200; these read STVPLAHHHHHHHHHQALEPGDLL and GGAG…XGHL. Positions 99–108 are enriched in basic residues; it reads AHHHHHHHHH. Composition is skewed to gly residues over residues 132-165 and 172-184; these read GGAGAAGGGGAPTRPRGAGGPGGGGGPGGGGPGV and PGGGGGGPGGGLL. The region spanning 261–338 is the POU-specific domain; the sequence is DSDTDPRELE…ILQAWLEEAE (78 aa). A DNA-binding region (homeobox) is located at residues 356–415; the sequence is KKRKRTSIAAPEKRSLEAYFAVQPRPSSEKIAAIAEKLDLKKNVVRVWFCNQRQKQKRMK.

The protein belongs to the POU transcription factor family. Class-4 subfamily. In terms of assembly, interacts (via N-terminus) with RIT2; the interaction controls POU4F1 transactivation activity on some neuronal target genes. Isoform 1 interacts with POU4F2; this interaction inhibits both POU4F1 DNA-binding and transcriptional activities. Isoform 1 interacts (C-terminus) with ESR1 (via DNA-binding domain); this interaction decreases the estrogen receptor ESR1 transcriptional activity in a DNA- and ligand 17-beta-estradiol-independent manner. In terms of tissue distribution, detected in brain, spinal cord and dorsal root ganglion. Isoform 2 is detected in brain, spinal cord, dorsal root ganglion and spleen.

It localises to the nucleus. It is found in the cytoplasm. Its function is as follows. Multifunctional transcription factor with different regions mediating its different effects. Acts by binding (via its C-terminal domain) to sequences related to the consensus octamer motif 5'-ATGCAAAT-3' in the regulatory regions of its target genes. Regulates the expression of specific genes involved in differentiation and survival within a subset of neuronal lineages. It has been shown that activation of some of these genes requires its N-terminal domain, maybe through a neuronal-specific cofactor. Activates BCL2 expression and protects neuronal cells from apoptosis (via the N-terminal domain). Induces neuronal process outgrowth and the coordinate expression of genes encoding synaptic proteins. Exerts its major developmental effects in somatosensory neurons and in brainstem nuclei involved in motor control. Stimulates the binding affinity of the nuclear estrogene receptor ESR1 to DNA estrogen response element (ERE), and hence modulates ESR1-induced transcriptional activity. May positively regulate POU4F2 and POU4F3. Regulates dorsal root ganglion sensory neuron specification and axonal projection into the spinal cord. Plays a role in TNFSF11-mediated terminal osteoclast differentiation. Negatively regulates its own expression interacting directly with a highly conserved autoregulatory domain surrounding the transcription initiation site. Able to act as transcription factor, cannot regulate the expression of the same subset of genes than isoform 1. Does not have anitapoptotic effect on neuronal cells. This Rattus norvegicus (Rat) protein is POU domain, class 4, transcription factor 1 (Pou4f1).